A 214-amino-acid chain; its full sequence is Large ribosomal subunit protein eL14 (214 aa).

K79 carries the post-translational modification N6-acetyllysine. K85 carries the N6-acetyllysine; alternate modification. At K85 the chain carries N6-succinyllysine; alternate. K124 participates in a covalent cross-link: Glycyl lysine isopeptide (Lys-Gly) (interchain with G-Cter in SUMO2). The residue at position 139 (S139) is a Phosphoserine. Residues 161–214 (PAKKITTEGKKAPAQKAPAQKAAGQKAAPPPKTQKGQKAPSQKAPAPKASGKKA) are disordered. A 1-1; approximate repeat occupies 170 to 174 (KKAPA). Residues 170-189 (KKAPAQKAPAQKAAGQKAAP) form a 4 X 5 AA tandem repeats of Q-K-A-[APS]-X region. Over residues 172 to 214 (APAQKAPAQKAAGQKAAPPPKTQKGQKAPSQKAPAPKASGKKA) the composition is skewed to low complexity. Tandem repeats lie at residues 175–179 (QKAPA), 180–184 (QKAAG), 185–189 (QKAAP), 192–194 (KTQ), and 195–197 (KGQ). Positions 192–197 (KTQKGQ) are 2 X 3 AA tandem repeats of K-G-Q. The residue at position 203 (K203) is an N6-succinyllysine.

It belongs to the eukaryotic ribosomal protein eL14 family. In terms of assembly, component of the large ribosomal subunit.

Its subcellular location is the cytoplasm. Component of the large ribosomal subunit. The ribosome is a large ribonucleoprotein complex responsible for the synthesis of proteins in the cell. This is Large ribosomal subunit protein eL14 (RPL14) from Bos taurus (Bovine).